Reading from the N-terminus, the 511-residue chain is Voltage-gated potassium channel KCNC1 (511 aa).

Residues 1-190 (MGQGDESERI…EDPYSSRYAR (190 aa)) are Cytoplasmic-facing. Position 44 is a phosphoserine (S44). Zn(2+) is bound by residues H77, C83, C104, and C105. Residues 121–147 (SFGGAPLDNSADDADADGPGDSGDGED) form a disordered region. A phosphoserine mark is found at S130, S142, S158, and S160. The span at 130-147 (SADDADADGPGDSGDGED) shows a compositional bias: acidic residues. The chain crosses the membrane as a helical span at residues 191-209 (YVAFASLFFILVSITTFCL). N220 and N229 each carry an N-linked (GlcNAc...) asparagine glycan. A helical membrane pass occupies residues 248 to 267 (IEGVCVVWFTFEFLMRVVFC). The Cytoplasmic segment spans residues 268-276 (PNKVEFIKN). The chain crosses the membrane as a helical span at residues 277–295 (SLNIIDFVAILPFYLEVGL). A helical; Voltage-sensor membrane pass occupies residues 309-331 (FLRVVRFVRILRIFKLTRHFVGL). At 332–344 (RVLGHTLRASTNE) the chain is on the cytoplasmic side. A helical membrane pass occupies residues 345–366 (FLLLIIFLALGVLIFATMIYYA). K(+) contacts are provided by T400, L401, G402, and Y403. Residues 400–405 (TLGYGD) carry the Selectivity filter motif. Residues 415 to 436 (LVGALCALAGVLTIAMPVPVIV) form a helical membrane-spanning segment. Over 437-511 (NNFGMYYSLA…GRKPLRGMSI (75 aa)) the chain is Cytoplasmic. A Phosphoserine modification is found at S474. A Phosphothreonine modification is found at T483.

This sequence belongs to the potassium channel family. C (Shaw) (TC 1.A.1.2) subfamily. Kv3.1/KCNC1 sub-subfamily. Homotetramer. Homomultimer. Heteromultimer with KCNG3, KCNG4 and KCNV2. Heteromultimer with KCNC2. Heterotetramer with KCNC3. Interacts with the ancillary subunits KCNE1 and KCNE2; the interaction modulates channel activity. Post-translationally, N-glycosylated; contains sialylated glycans. In terms of tissue distribution, detected in cerebellum. Detected in brain (at protein level). Detected in brain.

The protein localises to the cell membrane. It localises to the cell projection. The protein resides in the axon. Its subcellular location is the presynaptic cell membrane. It carries out the reaction K(+)(in) = K(+)(out). In terms of biological role, voltage-gated potassium channel that opens in response to the voltage difference across the membrane and through which potassium ions pass in accordance with their electrochemical gradient. The mechanism is time-dependent and inactivation is slow. Plays an important role in the rapid repolarization of fast-firing brain neurons. Can form functional homotetrameric channels and heterotetrameric channels that contain variable proportions of KCNC2, and possibly other family members as well. Contributes to fire sustained trains of very brief action potentials at high frequency in pallidal neurons. The sequence is that of Voltage-gated potassium channel KCNC1 from Mus musculus (Mouse).